We begin with the raw amino-acid sequence, 225 residues long: Interleukin-6 (225 aa).

The N-terminal stretch at 1-24 (MPSRLNVFWLCAAALAALLRCAPA) is a signal peptide. A glycan (N-linked (GlcNAc...) asparagine) is linked at N98.

It belongs to the IL-6 superfamily. In terms of assembly, component of a hexamer of two molecules each of IL6, IL6R and IL6ST; first binds to IL6R to associate with the signaling subunit IL6ST. As to expression, expressed in white muscle, skin, spleen, anterior intestine and stomach. Not expressed in brain, gill, head kidney, posterior intestine and adipose tissue.

It localises to the secreted. Cytokine with a wide variety of biological functions in immunity, tissue regeneration, and metabolism. Binds to IL6R, then the complex associates to the signaling subunit IL6ST/gp130 to trigger the intracellular IL6-signaling pathway. The interaction with the membrane-bound IL6R and IL6ST stimulates 'classic signaling', whereas the binding of IL6 and soluble IL6R to IL6ST stimulates 'trans-signaling'. Alternatively, 'cluster signaling' occurs when membrane-bound IL6:IL6R complexes on transmitter cells activate IL6ST receptors on neighboring receiver cells. The sequence is that of Interleukin-6 (il6) from Sparus aurata (Gilthead sea bream).